A 662-amino-acid chain; its full sequence is MSQLLLFTILVFSSVFVIGSLSFIPPPHPFDPLTEIELNLVRNIINERYPIGLEHRFTFQYVGLNEPDKSLVLSWVSSQYHNVKSPPRQAFVIARDHGKTREIVVDFASQAIVSEKIHVGNGYPMLTIDEQQATSELVLKFKPFRDSIRRRGLNVSEVVVTTSTMGWFGEAKPERLIKKRPFYLNGSVNTYLRPIEGMTIIVNLDQMKVTKFRDRFTSPLPNAKGTEFRISKLKPPFGPSLQNAVLFQSEGPGFKIDGHTNRWANWEFHMSFDVRAGLVISLASIFDMDVNKYRQVLYKGHLSEIFVPYMDPSEDWYFRTFFDCGEFGCGQYAVSLEPYTDCPGNAAFMDGVFASQDGTPIKITNVMCIFEKYAGDIMWRHTEIEIPGLKVRPDVSLVVRMVTTVGNYDYIVDYEFKPSGSIKIGVGLTGVLEVKPVKYVNTSEIKEDDIHGTIVADNTIGVNHDHFVTYRLDLDIDGTDNSFVRSELVTKRTPKSVNTPRKSYWTTKRLKAEELLVVNPSRKTKHGNEVGYRLLHGPASEGPLLAQDDYPQIRAAFTNYNVWITPYNNTEVWASGLYADRSQGDDTLAVWSQRNRKIEKTDIVMWYTVGFHHVPCQEDFPTMPTLFGGFELRPTNFFEQNPDLKTKPIKLNTTPTCTARND.

The signal sequence occupies residues 1 to 22; sequence MSQLLLFTILVFSSVFVIGSLS. The N-linked (GlcNAc...) asparagine glycan is linked to N154. Residue 321–332 coordinates substrate; that stretch reads FFDCGEFGCGQY. D323 serves as the catalytic Proton acceptor. C342 and C368 are oxidised to a cystine. Position 405–410 (405–410) interacts with substrate; it reads VGNYDY. Catalysis depends on Y408, which acts as the Schiff-base intermediate with substrate; via topaquinone. Y408 is modified (2',4',5'-topaquinone). Positions 464 and 466 each coordinate Cu cation. D473 and D475 together coordinate Mn(2+). N-linked (GlcNAc...) asparagine glycosylation is present at N568. Mn(2+)-binding residues include D602 and I603. H613 contacts Cu cation.

It belongs to the copper/topaquinone oxidase family. As to quaternary structure, homodimer. Cu cation serves as cofactor. Mn(2+) is required as a cofactor. The cofactor is L-topaquinone. Post-translationally, topaquinone (TPQ) is generated by copper-dependent autoxidation of a specific tyrosyl residue.

It catalyses the reaction a primary methyl amine + O2 + H2O = an aldehyde + H2O2 + NH4(+). This is Primary amine oxidase 2 from Arabidopsis thaliana (Mouse-ear cress).